The following is a 125-amino-acid chain: Large ribosomal subunit protein uL24 (125 aa).

It belongs to the universal ribosomal protein uL24 family. Part of the 50S ribosomal subunit.

One of two assembly initiator proteins, it binds directly to the 5'-end of the 23S rRNA, where it nucleates assembly of the 50S subunit. Its function is as follows. One of the proteins that surrounds the polypeptide exit tunnel on the outside of the subunit. The sequence is that of Large ribosomal subunit protein uL24 from Mycoplasma mobile (strain ATCC 43663 / 163K / NCTC 11711) (Mesomycoplasma mobile).